Consider the following 129-residue polypeptide: Tumor necrosis factor receptor superfamily member 12A (129 aa).

Residues 1-27 (MARGSLRRLLRLLVLGLWLALLRSVAG) form the signal peptide. The Extracellular portion of the chain corresponds to 28 to 80 (EQAPGTAPCSRGSSWSADLDKCMDCASCRARPHSDFCLGCAAAPPAPFRLLWP). Intrachain disulfides connect Cys36–Cys49, Cys52–Cys67, and Cys55–Cys64. The stretch at 36–67 (CSRGSSWSADLDKCMDCASCRARPHSDFCLGC) is one TNFR-Cys; atypical repeat. A helical membrane pass occupies residues 81–101 (ILGGALSLTFVLGLLSGFLVW). The Cytoplasmic segment spans residues 102–129 (RRCRRREKFTTPIEETGGEGCPAVALIQ).

In terms of assembly, associates with TRAF1 and TRAF2, and probably also with TRAF3. Highly expressed in heart, placenta and kidney. Intermediate expression in lung, skeletal muscle and pancreas.

It localises to the membrane. Functionally, receptor for TNFSF12/TWEAK. Weak inducer of apoptosis in some cell types. Promotes angiogenesis and the proliferation of endothelial cells. May modulate cellular adhesion to matrix proteins. The polypeptide is Tumor necrosis factor receptor superfamily member 12A (TNFRSF12A) (Homo sapiens (Human)).